The primary structure comprises 155 residues: Small ribosomal subunit protein uS7 (155 aa).

This sequence belongs to the universal ribosomal protein uS7 family. As to quaternary structure, part of the 30S ribosomal subunit. Contacts proteins S9 and S11.

Functionally, one of the primary rRNA binding proteins, it binds directly to 16S rRNA where it nucleates assembly of the head domain of the 30S subunit. Is located at the subunit interface close to the decoding center, probably blocks exit of the E-site tRNA. In Chlorobium phaeovibrioides (strain DSM 265 / 1930) (Prosthecochloris vibrioformis (strain DSM 265)), this protein is Small ribosomal subunit protein uS7.